Consider the following 193-residue polypeptide: dTTP/UTP pyrophosphatase (193 aa).

Asp-68 (proton acceptor) is an active-site residue.

Belongs to the Maf family. YhdE subfamily. The cofactor is a divalent metal cation.

Its subcellular location is the cytoplasm. It carries out the reaction dTTP + H2O = dTMP + diphosphate + H(+). It catalyses the reaction UTP + H2O = UMP + diphosphate + H(+). Nucleoside triphosphate pyrophosphatase that hydrolyzes dTTP and UTP. May have a dual role in cell division arrest and in preventing the incorporation of modified nucleotides into cellular nucleic acids. This Ruegeria sp. (strain TM1040) (Silicibacter sp.) protein is dTTP/UTP pyrophosphatase.